Reading from the N-terminus, the 264-residue chain is MNAVAACFNALRQRGECALIPFLTAGDPDLATTAEALRILDRAGADLIELGVPYSDPLADGPVIQAAATRALQKGVKLDDVLAIVREVHQDIAAPIILFTYYNPIFYQGVEVFLDKIKAAGVKGLVVPDLPLEESDRLLEATAERGLELILLVAPTSSPERQTAIAKKSQGFVYLVSVTGVTGVRTEVGSRVEALLAGMRQVTDKPIGVGFGISQPEQAEQVKAWGADAVIVGSAMVKRLAEGTPTEGLQALETFCRELKTAIS.

Catalysis depends on proton acceptor residues Glu49 and Asp60.

This sequence belongs to the TrpA family. Tetramer of two alpha and two beta chains.

The enzyme catalyses (1S,2R)-1-C-(indol-3-yl)glycerol 3-phosphate + L-serine = D-glyceraldehyde 3-phosphate + L-tryptophan + H2O. Its pathway is amino-acid biosynthesis; L-tryptophan biosynthesis; L-tryptophan from chorismate: step 5/5. Functionally, the alpha subunit is responsible for the aldol cleavage of indoleglycerol phosphate to indole and glyceraldehyde 3-phosphate. The chain is Tryptophan synthase alpha chain from Synechocystis sp. (strain ATCC 27184 / PCC 6803 / Kazusa).